We begin with the raw amino-acid sequence, 517 residues long: MADDNGKNPMPNDRGYDTLLTAFNNLKLYANYNHQEPGESGNTNINSNNNHPNPPLLTAFKSLKLYANKNNQEPGESGNTTINRNKNHPNPPLVTAFNNLELYANYNHQEPGESGTTNINNNNPNPPLLTAFDNLRLYANYNHQEPGESSNNNYPNLNVYNVGHISAASFNAPPFTPSSLTQPDDSSSRYSGKPFPPPPLSFVSPGVDKDRNWLSSLLDMMTCAQRFTEFQKYLQDLDTYPTAERESHLFKIGSALTTTKRIFLHLATNQYGSQALRILFRRSPSLDHLLFCAVDTNFFLLMSDKYGRGLIIPAIRAVDKTKKESLYKLTYEYTLHLARLETGCLALNNVLQEIRGIYRDLIFECVANNADWLSFDPYGTHVVQNILILQNPVATTAIAERLRGSFFRLAMERQGSYVVEKCLKSDFARDQVLEEFRGNAKEWVRMTTDKFGNFVVQSALRVMKEKEMRPLLREFVEKLRPHFGKMEIGRGRNTLRVIQEEIVGWINQLPDKSGYVN.

Disordered regions lie at residues 33–57, 69–94, 107–130, and 175–201; these read NHQEPGESGNTNINSNNNHPNPPLL, KNNQEPGESGNTTINRNKNHPNPPLV, NHQEPGESGTTNINNNNPNPPLLT, and FTPSSLTQPDDSSSRYSGKPFPPPPLS. The segment covering 42 to 51 has biased composition (low complexity); that stretch reads NTNINSNNNH. Residues 69–84 are compositionally biased toward polar residues; it reads KNNQEPGESGNTTINR. A PUM-HD domain is found at 148 to 502; it reads ESSNNNYPNL…NTLRVIQEEI (355 aa). The span at 177–190 shows a compositional bias: polar residues; the sequence is PSSLTQPDDSSSRY. The stretch at 258 to 293 is one Pumilio 1; degenerate repeat; sequence TTKRIFLHLATNQYGSQALRILFRRSPSLDHLLFCA. One copy of the Pumilio 2 repeat lies at 294 to 328; that stretch reads VDTNFFLLMSDKYGRGLIIPAIRAVDKTKKESLYK. The stretch at 329 to 363 is one Pumilio 3; degenerate repeat; that stretch reads LTYEYTLHLARLETGCLALNNVLQEIRGIYRDLIF. 3 Pumilio repeats span residues 364 to 400, 401 to 437, and 438 to 473; these read ECVANNADWLSFDPYGTHVVQNILILQNPVATTAIAE, RLRGSFFRLAMERQGSYVVEKCLKSDFARDQVLEEFR, and GNAKEWVRMTTDKFGNFVVQSALRVMKEKEMRPLLR.

The protein resides in the cytoplasm. Sequence-specific RNA-binding protein that regulates translation and mRNA stability by binding the 3'-UTR of target mRNAs. This is Putative pumilio homolog 21 (APUM21) from Arabidopsis thaliana (Mouse-ear cress).